We begin with the raw amino-acid sequence, 171 residues long: Probable chorismate pyruvate-lyase (171 aa).

The substrate site is built by Met36, Arg78, Leu116, and Glu157.

It belongs to the UbiC family.

The protein resides in the cytoplasm. It carries out the reaction chorismate = 4-hydroxybenzoate + pyruvate. Its pathway is cofactor biosynthesis; ubiquinone biosynthesis. Functionally, removes the pyruvyl group from chorismate, with concomitant aromatization of the ring, to provide 4-hydroxybenzoate (4HB) for the ubiquinone pathway. The polypeptide is Probable chorismate pyruvate-lyase (Bartonella henselae (strain ATCC 49882 / DSM 28221 / CCUG 30454 / Houston 1) (Rochalimaea henselae)).